A 322-amino-acid chain; its full sequence is Eukaryotic translation initiation factor 3 subunit I (322 aa).

5 WD repeats span residues G4 to T43, G46 to S85, M141 to D180, D184 to T223, and G281 to E322.

The protein belongs to the eIF-3 subunit I family. As to quaternary structure, component of the eukaryotic translation initiation factor 3 (eIF-3) complex. The eIF-3 complex interacts with pix.

It is found in the cytoplasm. Component of the eukaryotic translation initiation factor 3 (eIF-3) complex, which is involved in protein synthesis of a specialized repertoire of mRNAs and, together with other initiation factors, stimulates binding of mRNA and methionyl-tRNAi to the 40S ribosome. The eIF-3 complex specifically targets and initiates translation of a subset of mRNAs involved in cell proliferation. This is Eukaryotic translation initiation factor 3 subunit I from Drosophila mojavensis (Fruit fly).